The primary structure comprises 579 residues: Aspartate--tRNA(Asp/Asn) ligase (579 aa).

An L-aspartate-binding site is contributed by Glu171. Residues 195-198 (QLFK) form an aspartate region. Arg217 provides a ligand contact to L-aspartate. ATP contacts are provided by residues 217-219 (RDE) and Gln226. Residue His444 participates in L-aspartate binding. Glu475 provides a ligand contact to ATP. Position 482 (Arg482) interacts with L-aspartate. 527 to 530 (GLDR) is a binding site for ATP.

This sequence belongs to the class-II aminoacyl-tRNA synthetase family. Type 1 subfamily. In terms of assembly, homodimer.

It localises to the cytoplasm. The enzyme catalyses tRNA(Asx) + L-aspartate + ATP = L-aspartyl-tRNA(Asx) + AMP + diphosphate. Its function is as follows. Aspartyl-tRNA synthetase with relaxed tRNA specificity since it is able to aspartylate not only its cognate tRNA(Asp) but also tRNA(Asn). Reaction proceeds in two steps: L-aspartate is first activated by ATP to form Asp-AMP and then transferred to the acceptor end of tRNA(Asp/Asn). This is Aspartate--tRNA(Asp/Asn) ligase from Thermotoga maritima (strain ATCC 43589 / DSM 3109 / JCM 10099 / NBRC 100826 / MSB8).